We begin with the raw amino-acid sequence, 259 residues long: MKMSGLLSKPDYGVVGIVFTVVFCCWCSSSTTHALSIAEPGRDRYDKRSPTGHGVEVVESGEDYGSNRPQPVYGDEDEEDSADVYVGSDESSSGEKTRLTAAKRRLRFNKRRLRASKRRLRFHKRRVDSADESNDDGFDRKAREPRLRFHDVRKRSATAEEGSENAEIEESHLGNSRSRRSAGSAPSSANEVQRSKRLSITNDLRAIADSYLYDQHKLRERQEENLRRRFLELGKRGSAFFDHIPIIFGEPQYDYQPFK.

Positions 1 to 34 are cleaved as a signal peptide; sequence MKMSGLLSKPDYGVVGIVFTVVFCCWCSSSTTHA. The propeptide occupies 35–102; it reads LSIAEPGRDR…SGEKTRLTAA (68 aa). Positions 42 to 103 are disordered; it reads RDRYDKRSPT…GEKTRLTAAK (62 aa). 2 repeats span residues 119–123 and 146–150; these read RLRFH. The segment at 119–150 is 2 X 5 AA repeats of R-L-R-F-H; it reads RLRFHKRRVDSADESNDDGFDRKAREPRLRFH. The tract at residues 149–197 is disordered; it reads FHDVRKRSATAEEGSENAEIEESHLGNSRSRRSAGSAPSSANEVQRSKR. Residues 181-195 constitute a propeptide that is removed on maturation; sequence SAGSAPSSANEVQRS. Leucine 233 is modified (leucine amide). Residues 237–259 constitute a propeptide that is removed on maturation; sequence GSAFFDHIPIIFGEPQYDYQPFK.

Belongs to the molluscan ELH family.

The protein localises to the secreted. In terms of biological role, CDCH induces ovulation and egg-mass production; it may also stimulate synthesis of secretory products in the female accessory sex glands and affect neurons in the neuronal circuits controlling locomotion and feeding. Calfluxin is involved in the influx of calcium into mitochondria of the albumen gland. Functionally, CDCA (or alpha-CDCP) triggers the electrical activity of the caudodorsal cells (CDCS). In Lymnaea stagnalis (Great pond snail), this protein is Ovulation prohormone.